Here is a 287-residue protein sequence, read N- to C-terminus: MSDNLKIGLQYLTPKHALTRLAGKLASAKMGWLTTAVIKWFIKQYNVNMDEAKNPDPEAYSTFNNFFVRELEDGARPINEDDSVISHPADACVSQFGPIMDGKLVQAKGHVYSAQELLGGDEALAAEFMGGEFATLYLSPSDYHRVHMPCDATLRKMIYVPGDLFSVNPLTAENVPNLFARNERVVCIFDTEFGPMAQILVGATIVGSIETTWAETVTPPTGPAVKTWHYPLSGDDMICFKKGEEMGRFKLGSTVINLFAPNSIKFDDSMENGTPTRMGTPFAHIVK.

Residues D90, H147, and S253 each act as charge relay system; for autoendoproteolytic cleavage activity in the active site. Residue S253 is the Schiff-base intermediate with substrate; via pyruvic acid; for decarboxylase activity of the active site. S253 carries the pyruvic acid (Ser); by autocatalysis modification.

The protein belongs to the phosphatidylserine decarboxylase family. PSD-B subfamily. Prokaryotic type I sub-subfamily. As to quaternary structure, heterodimer of a large membrane-associated beta subunit and a small pyruvoyl-containing alpha subunit. The cofactor is pyruvate. In terms of processing, is synthesized initially as an inactive proenzyme. Formation of the active enzyme involves a self-maturation process in which the active site pyruvoyl group is generated from an internal serine residue via an autocatalytic post-translational modification. Two non-identical subunits are generated from the proenzyme in this reaction, and the pyruvate is formed at the N-terminus of the alpha chain, which is derived from the carboxyl end of the proenzyme. The autoendoproteolytic cleavage occurs by a canonical serine protease mechanism, in which the side chain hydroxyl group of the serine supplies its oxygen atom to form the C-terminus of the beta chain, while the remainder of the serine residue undergoes an oxidative deamination to produce ammonia and the pyruvoyl prosthetic group on the alpha chain. During this reaction, the Ser that is part of the protease active site of the proenzyme becomes the pyruvoyl prosthetic group, which constitutes an essential element of the active site of the mature decarboxylase.

It is found in the cell membrane. The enzyme catalyses a 1,2-diacyl-sn-glycero-3-phospho-L-serine + H(+) = a 1,2-diacyl-sn-glycero-3-phosphoethanolamine + CO2. Its pathway is phospholipid metabolism; phosphatidylethanolamine biosynthesis; phosphatidylethanolamine from CDP-diacylglycerol: step 2/2. In terms of biological role, catalyzes the formation of phosphatidylethanolamine (PtdEtn) from phosphatidylserine (PtdSer). The protein is Phosphatidylserine decarboxylase proenzyme of Aliivibrio fischeri (strain ATCC 700601 / ES114) (Vibrio fischeri).